The chain runs to 145 residues: uncharacterized protein (145 aa).

Substrate is bound by residues Val97 and Asn121.

This sequence belongs to the D-isomer specific 2-hydroxyacid dehydrogenase family. FDH subfamily.

This is an uncharacterized protein from Saccharomyces cerevisiae (strain ATCC 204508 / S288c) (Baker's yeast).